Consider the following 187-residue polypeptide: Peptidyl-tRNA hydrolase (187 aa).

Tyr16 is a tRNA binding site. Catalysis depends on His21, which acts as the Proton acceptor. Residues Tyr66, Asn68, and Asn114 each coordinate tRNA.

The protein belongs to the PTH family. As to quaternary structure, monomer.

The protein localises to the cytoplasm. It carries out the reaction an N-acyl-L-alpha-aminoacyl-tRNA + H2O = an N-acyl-L-amino acid + a tRNA + H(+). Functionally, hydrolyzes ribosome-free peptidyl-tRNAs (with 1 or more amino acids incorporated), which drop off the ribosome during protein synthesis, or as a result of ribosome stalling. Its function is as follows. Catalyzes the release of premature peptidyl moieties from peptidyl-tRNA molecules trapped in stalled 50S ribosomal subunits, and thus maintains levels of free tRNAs and 50S ribosomes. This chain is Peptidyl-tRNA hydrolase, found in Malacoplasma penetrans (strain HF-2) (Mycoplasma penetrans).